We begin with the raw amino-acid sequence, 146 residues long: Probable calcium-binding protein CML40 (146 aa).

In terms of domain architecture, EF-hand 1 spans 7–42 (NKRDEYQRVFSCFDKSHQGKVSVSTIERCVDAIKSG). Residues 44–65 (RAVVDQEDTTNPNPEESTDDKS) form a disordered region. Residues 116 to 146 (KSLKDCEVMISQFDINRDGIINFDEFRAMMQ) form the EF-hand 2 domain. Asp129, Asn131, Asp133, and Glu140 together coordinate Ca(2+).

Its function is as follows. Potential calcium sensor. The protein is Probable calcium-binding protein CML40 (CML40) of Arabidopsis thaliana (Mouse-ear cress).